The following is a 324-amino-acid chain: Myb-like DNA-binding protein myb-1 (324 aa).

2 HTH myb-type domains span residues 4–59 and 60–110; these read MPDQ…KPGL and NHGP…NRKK. Positions 107–231 are disordered; it reads NRKKNQLRRQ…PTGSTLRLLT (125 aa). The segment covering 155-165 has biased composition (polar residues); the sequence is RRPSSPSSFND. The span at 166-175 shows a compositional bias: basic and acidic residues; that stretch reads SLHHRVHESI. Low complexity-rich tracts occupy residues 183–192 and 222–231; these read QQQQQQQQQQ and PTGSTLRLLT.

Its subcellular location is the nucleus. The polypeptide is Myb-like DNA-binding protein myb-1 (rca-1) (Neurospora crassa (strain ATCC 24698 / 74-OR23-1A / CBS 708.71 / DSM 1257 / FGSC 987)).